We begin with the raw amino-acid sequence, 240 residues long: Probable transcriptional regulatory protein MADE_1004275 (240 aa).

This sequence belongs to the TACO1 family.

It localises to the cytoplasm. The sequence is that of Probable transcriptional regulatory protein MADE_1004275 from Alteromonas mediterranea (strain DSM 17117 / CIP 110805 / LMG 28347 / Deep ecotype).